The following is a 418-amino-acid chain: MRESQDAAGAHGWNRVGSTATKWFTGAPFGVQSHRFDISAVYPNWKKFSTFTEAPYSTRYSTQVSHIGPGTYSSKETCFSKKKLMKEVDTGWAKAQEATRLTQLPHFQYQAIMKEKRLKEQKLGPGSYNLKDFLEQLREKPCSTRGLLSSGEVRFRGLTGNYYPGPGNYGEKGNPYTKLEENAWNRSHSEGLMCRMSNKPHPRPHQGSGLGPGTYFFKSDLETYVARSVGTRGPYDTFSGDRSKPLPYGHYSMQKKKPRELMNFKSFVEELNSHHNKKHGVFSKLPRNPKTPTERIYWANLSQCPRTLATSGPSFWLPQEKKCKPVNQPPFLLTSKGSGAKACQMIMGSWNPVGVGRYLNTWLMETKDRRQRYRSLFLSGSKRYLSDLARDMLMQERITPFTKGKCPPTVDYNSDPTP.

In terms of tissue distribution, sperm.

The protein is Ciliary microtubule-associated protein 2 of Homo sapiens (Human).